Reading from the N-terminus, the 346-residue chain is Proto-oncogene serine/threonine-protein kinase mos (346 aa).

The Protein kinase domain maps to valine 60–leucine 341. Residues leucine 66–valine 74 and lysine 87 contribute to the ATP site. Residue aspartate 201 is the Proton acceptor of the active site.

The protein belongs to the protein kinase superfamily. Ser/Thr protein kinase family.

The catalysed reaction is L-seryl-[protein] + ATP = O-phospho-L-seryl-[protein] + ADP + H(+). It carries out the reaction L-threonyl-[protein] + ATP = O-phospho-L-threonyl-[protein] + ADP + H(+). This Chlorocebus aethiops (Green monkey) protein is Proto-oncogene serine/threonine-protein kinase mos.